The chain runs to 137 residues: MKPGEIIVKRTEIEVNRGHNATILDVKNTGDRPIQVGSHYHFFEANPALQFEREKAYGKRLDIPAGAAVRFEPGDEKEVQLVEYSGKRRIFGFHGEVNGPIDEARVYKAEDDDSATEIIAEENKVSENANKESGYNR.

A disordered region spans residues 118-137 (IIAEENKVSENANKESGYNR). The segment covering 126–137 (SENANKESGYNR) has biased composition (polar residues).

The protein belongs to the urease beta subunit family. As to quaternary structure, heterotrimer of UreA (gamma), UreB (beta) and UreC (alpha) subunits. Three heterotrimers associate to form the active enzyme.

Its subcellular location is the cytoplasm. It carries out the reaction urea + 2 H2O + H(+) = hydrogencarbonate + 2 NH4(+). The protein operates within nitrogen metabolism; urea degradation; CO(2) and NH(3) from urea (urease route): step 1/1. The chain is Urease subunit beta from Staphylococcus xylosus.